Reading from the N-terminus, the 367-residue chain is Peptide chain release factor 2 (367 aa).

Gln254 is subject to N5-methylglutamine.

Belongs to the prokaryotic/mitochondrial release factor family. In terms of processing, methylated by PrmC. Methylation increases the termination efficiency of RF2.

It is found in the cytoplasm. Peptide chain release factor 2 directs the termination of translation in response to the peptide chain termination codons UGA and UAA. The sequence is that of Peptide chain release factor 2 from Neisseria meningitidis serogroup A / serotype 4A (strain DSM 15465 / Z2491).